The chain runs to 428 residues: Lupus La protein homolog A (428 aa).

The region spanning 7 to 99 (KEQKLDSDTK…RRSPAKPLPE (93 aa)) is the HTH La-type RNA-binding domain. In terms of domain architecture, RRM spans 111 to 203 (KSVYIKGFPT…EERKLNKSEE (93 aa)). Disordered regions lie at residues 187-223 (EYHA…DAER) and 323-428 (QESF…VGDQ). 2 short sequence motifs (nuclear localization signal) span residues 196 to 212 (RKLN…QVKK) and 316 to 332 (KKIL…RKGR). Residues 227–349 (EERVGSLLKF…KGRGGKGNDS (123 aa)) enclose the xRRM domain. 2 stretches are compositionally biased toward basic residues: residues 328–343 (KRKG…KGRG) and 352–361 (RKRTQFQGKK). A compositionally biased stretch (acidic residues) spans 366 to 377 (SSDDEDDMEESE). Residues 406 to 428 (RSLDDKAEDGPAVKQSKTEVGDQ) show a composition bias toward basic and acidic residues.

Phosphorylated.

The protein localises to the nucleus. Functionally, la protein plays a role in the transcription of RNA polymerase III. It is most probably a transcription termination factor. Binds to the 3' termini of virtually all nascent polymerase III transcripts. In Xenopus laevis (African clawed frog), this protein is Lupus La protein homolog A (ssb-a).